The sequence spans 226 residues: UPF0758 protein SE_1336 (226 aa).

The region spanning Q102 to F224 is the MPN domain. Residues H173, H175, and D186 each contribute to the Zn(2+) site. A JAMM motif motif is present at residues H173–D186.

It belongs to the UPF0758 family.

The sequence is that of UPF0758 protein SE_1336 from Staphylococcus epidermidis (strain ATCC 12228 / FDA PCI 1200).